Consider the following 591-residue polypeptide: L-fucose isomerase (591 aa).

Active-site proton acceptor residues include E337 and D361. The Mn(2+) site is built by E337, D361, and H528.

It belongs to the L-fucose isomerase family. In terms of assembly, homohexamer. Requires Mn(2+) as cofactor.

It is found in the cytoplasm. It carries out the reaction L-fucose = L-fuculose. The protein operates within carbohydrate degradation; L-fucose degradation; L-lactaldehyde and glycerone phosphate from L-fucose: step 1/3. Functionally, converts the aldose L-fucose into the corresponding ketose L-fuculose. This chain is L-fucose isomerase, found in Salmonella paratyphi B (strain ATCC BAA-1250 / SPB7).